The following is a 110-amino-acid chain: Coiled-coil-helix-coiled-coil-helix domain-containing protein 5 (110 aa).

An N-acetylmethionine modification is found at methionine 1. CHCH domains are found at residues 9 to 52 (ARYC…PIIR) and 55 to 97 (RQAC…QPPS). 4 short sequence motifs (cx9C motif) span residues 12 to 22 (CSRELDQYGQC), 34 to 44 (CHHLKMSIARC), 58 to 68 (CAEPFEAFEKC), and 79 to 89 (CAEHMRRFLQC). Cystine bridges form between cysteine 12/cysteine 44, cysteine 22/cysteine 34, cysteine 58/cysteine 89, and cysteine 68/cysteine 79.

Monomer.

It is found in the mitochondrion intermembrane space. The sequence is that of Coiled-coil-helix-coiled-coil-helix domain-containing protein 5 (Chchd5) from Mus musculus (Mouse).